A 1792-amino-acid polypeptide reads, in one-letter code: BTB/POZ domain-containing protein 8 (1792 aa).

BTB domains are found at residues T58–N127 and P206–D273. 8 disordered regions span residues D528 to G554, S581 to V658, T670 to R692, K707 to P768, S788 to V815, A831 to K989, E1151 to R1283, and S1519 to D1607. Composition is skewed to polar residues over residues F541–D552 and G588–T601. Composition is skewed to basic and acidic residues over residues L602–T625 and S640–L650. A compositionally biased stretch (polar residues) spans G724–T740. Over residues D744–S758 the composition is skewed to basic and acidic residues. Residues T838–E865 are compositionally biased toward polar residues. Low complexity predominate over residues S866–R877. Composition is skewed to basic and acidic residues over residues Q878–T891 and K927–Q939. The segment covering I947–R956 has biased composition (polar residues). A compositionally biased stretch (basic and acidic residues) spans M969–P987. Polar residues-rich tracts occupy residues E1151–A1160 and S1195–M1215. A compositionally biased stretch (low complexity) spans S1250–S1259. A compositionally biased stretch (basic and acidic residues) spans I1566–N1594. Over residues I1597–D1607 the composition is skewed to polar residues.

Interacts (via N-terminus) with adapter protein complex AP-2 subunits alpha (AP2A1) and beta (AP2B1). As to expression, highly expressed in fetal brain. Weakly expressed in adult brain and prostate.

It localises to the cell projection. The protein localises to the axon. Its subcellular location is the presynapse. The protein resides in the cytoplasmic vesicle. It is found in the clathrin-coated vesicle. It localises to the nucleus. Functionally, involved in clathrin-mediated endocytosis at the synapse. Plays a role in neuronal development and in synaptic vesicle recycling in mature neurons, a process required for normal synaptic transmission. The chain is BTB/POZ domain-containing protein 8 from Homo sapiens (Human).